We begin with the raw amino-acid sequence, 95 residues long: UPF0473 protein ABC1595 (95 aa).

The protein belongs to the UPF0473 family.

The chain is UPF0473 protein ABC1595 from Shouchella clausii (strain KSM-K16) (Alkalihalobacillus clausii).